Reading from the N-terminus, the 355-residue chain is MSKIAFTGGGTVGHVSVNLSLIPTATDKGHDAFYIGSKTGIEREMIESQLPNIEYYPISSGKLRRYLSVDNAKDVFKVLKGVIDARKVLKREKPDLLFSKGGFVSVPVVIAARSLNIPTIIHESDLTPGLANKISLKFAKKIYTTFEDTLKYLPKDKADFVGATIRQDLKEGNQSRGYQLTGFDASKKVLLVMGGSLGSKKLNQAIRENLEALLQDYQIIHLTGHGLVDSSIDAKGYVQYEFVKEELTDLLAITDTVVSRAGSNAIYEFLTLRIPMLLIPLGLDQSRGDQIDNAENFESKGYGRTIPEDQLTQVKLLEQLKEIENDRESIIKQMETYRESYTKEDLFNKILKDAL.

UDP-N-acetyl-alpha-D-glucosamine is bound by residues Arg-166, Ser-196, and Gln-290.

The protein belongs to the glycosyltransferase 28 family. MurG subfamily.

The protein resides in the cell membrane. The enzyme catalyses Mur2Ac(oyl-L-Ala-gamma-D-Glu-L-Lys-D-Ala-D-Ala)-di-trans,octa-cis-undecaprenyl diphosphate + UDP-N-acetyl-alpha-D-glucosamine = beta-D-GlcNAc-(1-&gt;4)-Mur2Ac(oyl-L-Ala-gamma-D-Glu-L-Lys-D-Ala-D-Ala)-di-trans,octa-cis-undecaprenyl diphosphate + UDP + H(+). It functions in the pathway cell wall biogenesis; peptidoglycan biosynthesis. Cell wall formation. Catalyzes the transfer of a GlcNAc subunit on undecaprenyl-pyrophosphoryl-MurNAc-pentapeptide (lipid intermediate I) to form undecaprenyl-pyrophosphoryl-MurNAc-(pentapeptide)GlcNAc (lipid intermediate II). This Staphylococcus haemolyticus (strain JCSC1435) protein is UDP-N-acetylglucosamine--N-acetylmuramyl-(pentapeptide) pyrophosphoryl-undecaprenol N-acetylglucosamine transferase.